A 183-amino-acid polypeptide reads, in one-letter code: Inner membrane-spanning protein YciB (183 aa).

5 consecutive transmembrane segments (helical) span residues 19–39 (LYGVQQAAITLVIATVIQLIV), 53–73 (IMGIFVVFFGILTAYFNDLNF), 76–96 (WKVTIINGLFAAVLLVSQFVF), 121–141 (LGWAGFFIICMLLNIVISYYF), and 151–171 (TFGFTGLSLIAAIATGVYLYP).

It belongs to the YciB family.

The protein localises to the cell inner membrane. In terms of biological role, plays a role in cell envelope biogenesis, maintenance of cell envelope integrity and membrane homeostasis. This chain is Inner membrane-spanning protein YciB, found in Actinobacillus pleuropneumoniae serotype 3 (strain JL03).